Here is a 366-residue protein sequence, read N- to C-terminus: Galactoside alpha-(1,2)-fucosyltransferase 1 (366 aa).

The Cytoplasmic portion of the chain corresponds to 1 to 8; that stretch reads MWPLSHRH. Residues 9–25 form a helical; Signal-anchor for type II membrane protein membrane-spanning segment; that stretch reads LCLAFLLVCVLSAISFF. The Lumenal portion of the chain corresponds to 26–366; that stretch reads LHIHQDSIRH…LSPLWTLAEP (341 aa). Asn-66, Asn-302, and Asn-328 each carry an N-linked (GlcNAc...) asparagine glycan.

This sequence belongs to the glycosyltransferase 11 family.

The protein resides in the golgi apparatus. The protein localises to the golgi stack membrane. It catalyses the reaction a beta-D-galactosyl-(1-&gt;4)-N-acetyl-beta-D-glucosaminyl derivative + GDP-beta-L-fucose = an alpha-L-Fuc-(1-&gt;2)-beta-D-Gal-(1-&gt;4)-beta-D-GlcNAc derivative + GDP + H(+). It carries out the reaction a ganglioside GA1 + GDP-beta-L-fucose = a ganglioside Fuc-GA1 + GDP + H(+). The enzyme catalyses a beta-D-Gal-(1-&gt;3)-beta-D-GlcNAc-(1-&gt;3)-beta-D-Gal-(1-&gt;4)-beta-D-Glc-(1&lt;-&gt;1')-Cer(d18:1(4E)) + GDP-beta-L-fucose = alpha-L-fucosyl-(1-&gt;2)- beta-D-galactosyl-(1-&gt;3)-N-acetyl-beta-D-glucosaminyl-(1-&gt;3)-beta-D-galactosyl-(1-&gt;4)-beta-D-glucosyl-(1&lt;-&gt;1')-N-acylsphing-4-enine + GDP + H(+). The catalysed reaction is a neolactoside nLc4Cer(d18:1(4E)) + GDP-beta-L-fucose = a neolactoside IV(2)-alpha-Fuc-nLc4Cer(d18:1(4E)) + GDP + H(+). It catalyses the reaction a ganglioside GM1 + GDP-beta-L-fucose = a ganglioside Fuc-GM1 + GDP + H(+). It carries out the reaction beta-D-galactosyl-(1-&gt;3)-N-acetyl-D-galactosamine + GDP-beta-L-fucose = alpha-L-fucosyl-(1-&gt;2)-beta-D-galactosyl-(1-&gt;3)-N-acetyl-D-galactosamine + GDP + H(+). The protein operates within protein modification; protein glycosylation. In terms of biological role, catalyzes the transfer of L-fucose, from a guanosine diphosphate-beta-L-fucose, to the terminal galactose residue of glycoconjugates through an alpha(1,2) linkage leading to H antigen synthesis that is an intermediate substrate in the synthesis of ABO blood group antigens. H antigen is essential for maturation of the glomerular layer of the main olfactory bulb, in cell migration and early cell-cell contacts during tumor associated angiogenesis. Preferentially fucosylates soluble lactose and to a lesser extent fucosylates glycolipids gangliosides GA1 and GM1a. This is Galactoside alpha-(1,2)-fucosyltransferase 1 from Aotus azarae (Azara's night monkey).